The following is a 1172-amino-acid chain: RNA polymerase-associated protein CTR9 homolog (1172 aa).

16 TPR repeats span residues 41-75, 129-162, 163-196, 198-231, 235-268, 306-339, 341-374, 412-444, 451-484, 497-530, 531-564, 566-598, 613-646, 648-680, 681-714, and 717-750; these read LHIW…NLDY, NHLL…SPNN, IPAL…NPGC, AGVR…NPTC, LVGL…DPSN, AESC…AAAS, VLPF…YPNN, VEAW…LQEK, PEIL…AKAE, VTTT…HPNY, VDCY…NQDH, DAWS…PSTQ, QTLH…DSKN, YAAN…TADI, SDVW…FYKH, and TEVL…APND. The tract at residues 889–1172 is disordered; sequence LNFTGEMETP…KSDRGSDDSD (284 aa). Residues 921 to 932 are compositionally biased toward acidic residues; it reads FDEFVNDDSDED. Gly residues predominate over residues 944-954; the sequence is GGSSGSGGEQG. 2 stretches are compositionally biased toward basic residues: residues 965–975 and 991–1001; these read KKKKKRRKRPQ and PKKRQPKKREK. The segment covering 1032–1042 has biased composition (basic and acidic residues); that stretch reads DKLKIADEGHG. 3 stretches are compositionally biased toward polar residues: residues 1068 to 1093, 1105 to 1134, and 1149 to 1159; these read DNAN…SDNN, GSDN…PESQ, and ASPNESEQEAS. Basic and acidic residues predominate over residues 1160 to 1172; sequence NNEKSDRGSDDSD.

In terms of assembly, component of the PAF1 complex, which at least consists of cdc73, paf1, leo1, ctr9 and rtf1. The PAF1 complex interacts with PHF5A.

The protein localises to the nucleus speckle. In terms of biological role, component of the PAF1 complex (PAF1C) which has multiple functions during transcription by RNA polymerase II. PAF1C associates with RNA polymerase II, is involved in transcriptional elongation and in histone modifications including methylation on histone H3 'Lys-4' (H3K4me3). The polypeptide is RNA polymerase-associated protein CTR9 homolog (ctr9) (Xenopus tropicalis (Western clawed frog)).